We begin with the raw amino-acid sequence, 21 residues long: Fibrinogen beta chain (21 aa).

The residue at position 1 (glutamine 1) is a Pyrrolidone carboxylic acid. A compositionally biased stretch (acidic residues) spans 1–10 (QFPTDYDEGQ). Residues 1–21 (QFPTDYDEGQDDRPKLGLGAR) form a disordered region. The O-linked (GalNAc...) threonine glycan is linked to threonine 4. At tyrosine 6 the chain carries Sulfotyrosine.

Heterohexamer; disulfide linked. Contains 2 sets of 3 non-identical chains (alpha, beta and gamma). The 2 heterotrimers are in head to head conformation with the N-termini in a small central domain. Post-translationally, conversion of fibrinogen to fibrin is triggered by thrombin, which cleaves fibrinopeptides A and B from alpha and beta chains, and thus exposes the N-terminal polymerization sites responsible for the formation of the soft clot.

The protein localises to the secreted. Cleaved by the protease thrombin to yield monomers which, together with fibrinogen alpha (FGA) and fibrinogen gamma (FGG), polymerize to form an insoluble fibrin matrix. Fibrin has a major function in hemostasis as one of the primary components of blood clots. In addition, functions during the early stages of wound repair to stabilize the lesion and guide cell migration during re-epithelialization. Was originally thought to be essential for platelet aggregation, based on in vitro studies using anticoagulated blood. However subsequent studies have shown that it is not absolutely required for thrombus formation in vivo. Enhances expression of SELP in activated platelets. Maternal fibrinogen is essential for successful pregnancy. Fibrin deposition is also associated with infection, where it protects against IFNG-mediated hemorrhage. May also facilitate the antibacterial immune response via both innate and T-cell mediated pathways. This is Fibrinogen beta chain (FGB) from Bubalus bubalis (Domestic water buffalo).